The sequence spans 328 residues: MPVTIKDVAKAAGVSPSTVTRVIQNKSTISDETKKRVRKAMKELNYHPNLNARSLVSSYTQVIGLVLPDDSDAFYQNPFFPSVLRGISQVASENHYAIQIATGKDEKERLNAISQMVYGKRVDGLIFLYAQEEDPLVKLVAEEQFPFLILGKSLSPFIPLVDNDNVQAGFDATEYFIKKGCKRIAFIGGSKKLFVTKDRLTGYEQALKHYKLTTDNNRIYFADEFLEEKGYKFSKRLFKHDPQIDAIITTDSLLAEGVCNYIAKHQLDVPVLSFDSVNPKLNLAAYVDINSLELGRVSLETILQIINDNKNNKQICYRQLIAHKIIEK.

An HTH lacI-type domain is found at 2–57 (PVTIKDVAKAAGVSPSTVTRVIQNKSTISDETKKRVRKAMKELNYHPNLNARSLVS). Residues 5–24 (IKDVAKAAGVSPSTVTRVIQ) constitute a DNA-binding region (H-T-H motif). Positions 173-218 (TEYFIKKGCKRIAFIGGSKKLFVTKDRLTGYEQALKHYKLTTDNNR) are inducer binding. The interval 282-291 (NLAAYVDINS) is dimerization.

In terms of biological role, transcriptional repressor of the maltosaccharide utilization operons malxCD and malMP. This is HTH-type transcriptional regulator MalR (malR) from Streptococcus pneumoniae serotype 4 (strain ATCC BAA-334 / TIGR4).